The following is a 257-amino-acid chain: NAD-capped RNA hydrolase NudC (257 aa).

A substrate-binding site is contributed by Arg69. Zn(2+)-binding residues include Cys98 and Cys101. Residue Glu111 coordinates substrate. Zn(2+) contacts are provided by Cys116 and Cys119. Tyr124 is a binding site for substrate. The Nudix hydrolase domain occupies Pro125 to Thr248. 3 residues coordinate a divalent metal cation: Ala158, Glu174, and Glu178. The Nudix box motif lies at Gly159–Gly180. Residue Gln192–Ser199 coordinates substrate. Residue Glu219 coordinates a divalent metal cation. Position 241 (Ala241) interacts with substrate.

This sequence belongs to the Nudix hydrolase family. NudC subfamily. As to quaternary structure, homodimer. It depends on Mg(2+) as a cofactor. Mn(2+) is required as a cofactor. The cofactor is Zn(2+).

The enzyme catalyses a 5'-end NAD(+)-phospho-ribonucleoside in mRNA + H2O = a 5'-end phospho-adenosine-phospho-ribonucleoside in mRNA + beta-nicotinamide D-ribonucleotide + 2 H(+). The catalysed reaction is NAD(+) + H2O = beta-nicotinamide D-ribonucleotide + AMP + 2 H(+). It catalyses the reaction NADH + H2O = reduced beta-nicotinamide D-ribonucleotide + AMP + 2 H(+). MRNA decapping enzyme that specifically removes the nicotinamide adenine dinucleotide (NAD) cap from a subset of mRNAs by hydrolyzing the diphosphate linkage to produce nicotinamide mononucleotide (NMN) and 5' monophosphate mRNA. The NAD-cap is present at the 5'-end of some mRNAs and stabilizes RNA against 5'-processing. Has preference for mRNAs with a 5'-end purine. Catalyzes the hydrolysis of a broad range of dinucleotide pyrophosphates. The polypeptide is NAD-capped RNA hydrolase NudC (Klebsiella pneumoniae (strain 342)).